We begin with the raw amino-acid sequence, 512 residues long: uncharacterized protein (512 aa).

A run of 12 helical transmembrane segments spans residues G25–A45, L55–L75, L96–A116, V123–V143, L148–V168, L183–P203, M238–A258, G263–W283, G294–E314, F329–V349, L359–G379, and A386–L406. Residues Y428–A512 form a disordered region.

The protein localises to the cell membrane. This is an uncharacterized protein from Mycobacterium tuberculosis (strain CDC 1551 / Oshkosh).